The following is a 427-amino-acid chain: Retron Mx65 reverse transcriptase (427 aa).

The 231-residue stretch at 136 to 366 (RHYSIHRPRE…GAQRVTGVTV (231 aa)) folds into the Reverse transcriptase domain. Residues D219, D315, and D316 each contribute to the Mg(2+) site.

The protein belongs to the bacterial reverse transcriptase family.

It catalyses the reaction DNA(n) + a 2'-deoxyribonucleoside 5'-triphosphate = DNA(n+1) + diphosphate. Its function is as follows. Reverse transcriptase (RT) responsible for synthesis of msDNA-Mx65 (a branched molecule with RNA linked by a 2',5'-phosphodiester bond to ssDNA). The retron transcript serves as primer (from a conserved internal G residue) and template for the reaction, and codes for the RT. The retron is involved in antiviral defense. This Myxococcus xanthus protein is Retron Mx65 reverse transcriptase.